A 175-amino-acid polypeptide reads, in one-letter code: uncharacterized protein (175 aa).

In terms of domain architecture, Macro spans 1–173; it reads MYKNIIKLIS…VYKEKYKKLL (173 aa).

Belongs to the MacroD-type family.

This is an uncharacterized protein from Fusobacterium nucleatum subsp. nucleatum (strain ATCC 25586 / DSM 15643 / BCRC 10681 / CIP 101130 / JCM 8532 / KCTC 2640 / LMG 13131 / VPI 4355).